Here is a 436-residue protein sequence, read N- to C-terminus: UDP-N-acetylmuramate--L-alanine ligase (436 aa).

110-116 (GAHGKTS) lines the ATP pocket.

It belongs to the MurCDEF family.

The protein resides in the cytoplasm. The catalysed reaction is UDP-N-acetyl-alpha-D-muramate + L-alanine + ATP = UDP-N-acetyl-alpha-D-muramoyl-L-alanine + ADP + phosphate + H(+). It functions in the pathway cell wall biogenesis; peptidoglycan biosynthesis. Cell wall formation. In Lacticaseibacillus paracasei (strain ATCC 334 / BCRC 17002 / CCUG 31169 / CIP 107868 / KCTC 3260 / NRRL B-441) (Lactobacillus paracasei), this protein is UDP-N-acetylmuramate--L-alanine ligase.